A 140-amino-acid polypeptide reads, in one-letter code: Large ribosomal subunit protein uL16 (140 aa).

Belongs to the universal ribosomal protein uL16 family. As to quaternary structure, part of the 50S ribosomal subunit.

Binds 23S rRNA and is also seen to make contacts with the A and possibly P site tRNAs. This Amoebophilus asiaticus (strain 5a2) protein is Large ribosomal subunit protein uL16.